Reading from the N-terminus, the 335-residue chain is 2-acylglycerol O-acyltransferase 1 (335 aa).

A run of 2 helical transmembrane segments spans residues 24–44 (WVFS…CLVL) and 47–67 (VWLL…TPQA). Asn125 and Asn180 each carry an N-linked (GlcNAc...) asparagine glycan.

It belongs to the diacylglycerol acyltransferase family.

Its subcellular location is the endoplasmic reticulum membrane. It carries out the reaction a 2-acylglycerol + an acyl-CoA = a 1,2-diacylglycerol + CoA. The catalysed reaction is a 2-acylglycerol + an acyl-CoA = a 1,2-diacyl-sn-glycerol + CoA. It catalyses the reaction a 2-acylglycerol + an acyl-CoA = a 2,3-diacyl-sn-glycerol + CoA. The enzyme catalyses a 1-acylglycerol + an acyl-CoA = a 1,2-diacylglycerol + CoA. It carries out the reaction a 1-acylglycerol + an acyl-CoA = a 1,3-diacylglycerol + CoA. The catalysed reaction is a 1-acyl-sn-glycerol + an acyl-CoA = a 1,3-diacyl-sn-glycerol + CoA. It catalyses the reaction a 3-acyl-sn-glycerol + an acyl-CoA = a 1,3-diacyl-sn-glycerol + CoA. It participates in glycerolipid metabolism; triacylglycerol biosynthesis. Functionally, involved in glycerolipid synthesis and lipid metabolism. Catalyzes the formation of diacylglycerol, the precursor of triacylglycerol, by transferring the acyl chain of a fatty acyl-CoA to a monoacylglycerol, mainly at the sn-1 or sn-3 positions. It uses both sn-2-monoacylglycerol (2-acylglycerol) and sn-1-monoacylglycerol (1-acyl-sn-glycerol) equally well as substrates, and uses sn-3-monoacylglycerol (3-acyl-sn-glycerol) with lower efficiency. The sequence is that of 2-acylglycerol O-acyltransferase 1 (mogat1) from Xenopus laevis (African clawed frog).